A 968-amino-acid polypeptide reads, in one-letter code: RNA polymerase-associated protein RapA (968 aa).

One can recognise a Helicase ATP-binding domain in the interval 164–334 (DVGRRHAPRV…FARLRLLDPD (171 aa)). 177 to 184 (DEVGLGKT) contributes to the ATP binding site. The DEAH box signature appears at 280–283 (DEAH). Residues 490–643 (RVEWLMGYLT…HTCPTGRAVY (154 aa)) form the Helicase C-terminal domain.

This sequence belongs to the SNF2/RAD54 helicase family. RapA subfamily. In terms of assembly, interacts with the RNAP. Has a higher affinity for the core RNAP than for the holoenzyme. Its ATPase activity is stimulated by binding to RNAP.

In terms of biological role, transcription regulator that activates transcription by stimulating RNA polymerase (RNAP) recycling in case of stress conditions such as supercoiled DNA or high salt concentrations. Probably acts by releasing the RNAP, when it is trapped or immobilized on tightly supercoiled DNA. Does not activate transcription on linear DNA. Probably not involved in DNA repair. The protein is RNA polymerase-associated protein RapA of Erwinia tasmaniensis (strain DSM 17950 / CFBP 7177 / CIP 109463 / NCPPB 4357 / Et1/99).